We begin with the raw amino-acid sequence, 29 residues long: Cyclotide mech-7 (29 aa).

A cross-link (cyclopeptide (Gly-Asp)) is located at residues 1–29 (GIPICGETCTIGTCNTPGCTCSWPVCTRD). 3 disulfide bridges follow: cysteine 5/cysteine 19, cysteine 9/cysteine 21, and cysteine 14/cysteine 26.

Post-translationally, this is a cyclic peptide. Contains 3 disulfide bonds.

Its function is as follows. Probably participates in a plant defense mechanism (Potential). Binds to and induces leakage in phospholipd membranes, particularly ones containing 1-palmitoyl-2-oleophosphatidylethanolamine (POPE). This chain is Cyclotide mech-7, found in Melicytus chathamicus (Chatham Island mahoe).